A 362-amino-acid chain; its full sequence is MLFWLTENVLALYSSRFNIVCHLTFRAIISFLSALFISLGIGHCVITWFHNLCFFQIVRCDGPKSHTQKQSTPTMGGIVLILSIVISVMVCADLSNIYVWYVFFILITYGILGLTDDILKIKKKSSKGLSVLHKYFWQSLIALTLVIIIFMSDRSLTSTQLIVPFFKNFMPQLGIWYIFLAYFVVVGTSNAVNLSDGLDGLAIMPIMFVAAGLAVVAWISNDIHFASHLNIPYICFSGELIIICSAIIGAGLGFLWFNTYPAQIFMGDVGSLSLGGTLGIIAVLLHQECLLLIMGGMFVIETLSVILQVIYFRLFGQRIFKMAPIHHHFELKGCPEPRIIVRFWIISLMLVFVGLITLKIRQ.

Transmembrane regions (helical) follow at residues 28–48 (IISFLSALFISLGIGHCVITW), 72–92 (TPTMGGIVLILSIVISVMVCA), 94–114 (LSNIYVWYVFFILITYGILGL), 131–151 (VLHKYFWQSLIALTLVIIIFM), 169–189 (FMPQLGIWYIFLAYFVVVGTS), 200–220 (GLAIMPIMFVAAGLAVVAWIS), 236–256 (FSGELIIICSAIIGAGLGFLW), 264–284 (IFMGDVGSLSLGGTLGIIAVL), 290–310 (LLLIMGGMFVIETLSVILQVI), and 339–359 (IIVRFWIISLMLVFVGLITLK).

It belongs to the glycosyltransferase 4 family. MraY subfamily. It depends on Mg(2+) as a cofactor.

Its subcellular location is the cell inner membrane. It catalyses the reaction UDP-N-acetyl-alpha-D-muramoyl-L-alanyl-gamma-D-glutamyl-meso-2,6-diaminopimeloyl-D-alanyl-D-alanine + di-trans,octa-cis-undecaprenyl phosphate = di-trans,octa-cis-undecaprenyl diphospho-N-acetyl-alpha-D-muramoyl-L-alanyl-D-glutamyl-meso-2,6-diaminopimeloyl-D-alanyl-D-alanine + UMP. The protein operates within cell wall biogenesis; peptidoglycan biosynthesis. Catalyzes the initial step of the lipid cycle reactions in the biosynthesis of the cell wall peptidoglycan: transfers peptidoglycan precursor phospho-MurNAc-pentapeptide from UDP-MurNAc-pentapeptide onto the lipid carrier undecaprenyl phosphate, yielding undecaprenyl-pyrophosphoryl-MurNAc-pentapeptide, known as lipid I. The polypeptide is Phospho-N-acetylmuramoyl-pentapeptide-transferase (Blochmanniella pennsylvanica (strain BPEN)).